Consider the following 376-residue polypeptide: Multicilin (376 aa).

A coiled-coil region spans residues 165–213; it reads EQYWRDVADHNQKALGDALVENNQLQVSLTEKQEEIASLKEKNIQLNEL. A disordered region spans residues 230 to 261; the sequence is ERPKHSSGATQGRLPVKRSLEDFYPQSNEPDS. The tract at residues 331–376 is TIRT domain; sequence TELEEDVSFRTSIKEHSTIRTLAFPQGNAFTIRTAAGGYKFRWVPN.

The protein belongs to the geminin family. Component of the EDM complex, at least composed of e2f4, e2f5, mcidas and tfdp1.

It is found in the nucleus. In terms of biological role, transcription regulator specifically required for multiciliate cell differentiation. Acts in a multiprotein complex containing e2f4 and e2f5 that binds and activate genes required for centriole biogenesis. Activates genes required for centriole assembly (plk4, cep152) and genes specifically required for motile cilia formation (foxj1). Also promotes the deuterosome pathway of centriole biogenesis by activating expression of deup1, but not its paralog cep63. In Xenopus tropicalis (Western clawed frog), this protein is Multicilin (mcidas).